A 37-amino-acid polypeptide reads, in one-letter code: Ferredoxin--NADP reductase, chloroplastic (37 aa).

NADP(+) contacts are provided by residues Ser3 and 24–25 (SR).

The protein belongs to the ferredoxin--NADP reductase type 1 family. It depends on FAD as a cofactor.

The protein localises to the plastid. It is found in the chloroplast stroma. It localises to the chloroplast thylakoid membrane. It carries out the reaction 2 reduced [2Fe-2S]-[ferredoxin] + NADP(+) + H(+) = 2 oxidized [2Fe-2S]-[ferredoxin] + NADPH. It functions in the pathway energy metabolism; photosynthesis. May play a key role in regulating the relative amounts of cyclic and non-cyclic electron flow to meet the demands of the plant for ATP and reducing power. This is Ferredoxin--NADP reductase, chloroplastic from Imperata cylindrica (Cogon grass).